A 136-amino-acid polypeptide reads, in one-letter code: Large ribosomal subunit protein uL16c (136 aa).

The protein belongs to the universal ribosomal protein uL16 family. Part of the 50S ribosomal subunit.

The protein localises to the plastid. Its subcellular location is the chloroplast. The sequence is that of Large ribosomal subunit protein uL16c from Guizotia abyssinica (Niger).